The primary structure comprises 423 residues: UDP-N-acetylglucosamine 1-carboxyvinyltransferase (423 aa).

Position 22–23 (22–23 (KN)) interacts with phosphoenolpyruvate. Residue arginine 93 participates in UDP-N-acetyl-alpha-D-glucosamine binding. The active-site Proton donor is the cysteine 117. Cysteine 117 carries the 2-(S-cysteinyl)pyruvic acid O-phosphothioketal modification. Residues 122 to 126 (RPVDL), aspartate 308, and valine 330 contribute to the UDP-N-acetyl-alpha-D-glucosamine site.

The protein belongs to the EPSP synthase family. MurA subfamily.

Its subcellular location is the cytoplasm. The catalysed reaction is phosphoenolpyruvate + UDP-N-acetyl-alpha-D-glucosamine = UDP-N-acetyl-3-O-(1-carboxyvinyl)-alpha-D-glucosamine + phosphate. The protein operates within cell wall biogenesis; peptidoglycan biosynthesis. Functionally, cell wall formation. Adds enolpyruvyl to UDP-N-acetylglucosamine. The protein is UDP-N-acetylglucosamine 1-carboxyvinyltransferase of Finegoldia magna (strain ATCC 29328 / DSM 20472 / WAL 2508) (Peptostreptococcus magnus).